The primary structure comprises 633 residues: UvrABC system protein C (633 aa).

A GIY-YIG domain is found at 21 to 100 (TDPGVYKFLD…IKELQPRYNV (80 aa)). In terms of domain architecture, UVR spans 214-249 (QELMDLLKDEMQRQSDAHNFEEAARLRDQVKALKDY).

It belongs to the UvrC family. As to quaternary structure, interacts with UvrB in an incision complex.

Its subcellular location is the cytoplasm. In terms of biological role, the UvrABC repair system catalyzes the recognition and processing of DNA lesions. UvrC both incises the 5' and 3' sides of the lesion. The N-terminal half is responsible for the 3' incision and the C-terminal half is responsible for the 5' incision. The sequence is that of UvrABC system protein C from Salinibacter ruber (strain DSM 13855 / M31).